We begin with the raw amino-acid sequence, 270 residues long: Co-chaperone protein DjlA (270 aa).

The Periplasmic portion of the chain corresponds to 1 to 6 (MQYWGK). Residues 7-31 (IIGVAVALMMGGGFWGVVLGLLVGH) form a helical membrane-spanning segment. Residues 32–270 (MFDKARSRKM…ELIKEQKGFK (239 aa)) are Cytoplasmic-facing. In terms of domain architecture, J spans 204-270 (DACNVLGVKT…ELIKEQKGFK (67 aa)).

Homodimer.

It localises to the cell inner membrane. In terms of biological role, regulatory DnaK co-chaperone. Direct interaction between DnaK and DjlA is needed for the induction of the wcaABCDE operon, involved in the synthesis of a colanic acid polysaccharide capsule, possibly through activation of the RcsB/RcsC phosphotransfer signaling pathway. The colanic acid capsule may help the bacterium survive conditions outside the host. The chain is Co-chaperone protein DjlA from Salmonella paratyphi A (strain ATCC 9150 / SARB42).